The sequence spans 77 residues: RNA-binding protein Hfq (77 aa).

The Sm domain occupies 9-68; it reads DPFLNALRKEHIPVAIYLVNGIKLQGQIESFDQFVILLKNTVSQMVYKHAISTVVPARAI.

The protein belongs to the Hfq family. In terms of assembly, homohexamer.

In terms of biological role, RNA chaperone that binds small regulatory RNA (sRNAs) and mRNAs to facilitate mRNA translational regulation in response to envelope stress, environmental stress and changes in metabolite concentrations. Also binds with high specificity to tRNAs. This is RNA-binding protein Hfq from Psychromonas ingrahamii (strain DSM 17664 / CCUG 51855 / 37).